The sequence spans 228 residues: Probable transcriptional regulatory protein SilR (228 aa).

One can recognise a Response regulatory domain in the interval 2–116 (KILIVEDDIK…ELLARVRTLL (115 aa)). 4-aspartylphosphate is present on aspartate 51. The segment at residues 125–225 (ESQLKVADLS…VRGVGYMLEI (101 aa)) is a DNA-binding region (ompR/PhoB-type).

In terms of processing, phosphorylated by SilS.

The protein resides in the cytoplasm. In terms of biological role, component of the sil cation-efflux system that confers resistance to silver. Probable member of a two-component regulatory system SilS/SilR. The chain is Probable transcriptional regulatory protein SilR (silR) from Salmonella typhimurium.